The primary structure comprises 144 residues: Large ribosomal subunit protein uL15 (144 aa).

The tract at residues 1 to 50 is disordered; that stretch reads MRLNTLSPAAGAKSAKKRVGRGIGSGLGKTGGRGVKGAGSRSGGGVRAGF. The span at 21 to 50 shows a compositional bias: gly residues; sequence RGIGSGLGKTGGRGVKGAGSRSGGGVRAGF.

This sequence belongs to the universal ribosomal protein uL15 family. Part of the 50S ribosomal subunit.

Binds to the 23S rRNA. In Tolumonas auensis (strain DSM 9187 / NBRC 110442 / TA 4), this protein is Large ribosomal subunit protein uL15.